Consider the following 178-residue polypeptide: NADH-quinone oxidoreductase subunit B 1 (178 aa).

Positions 39, 40, 104, and 135 each coordinate [4Fe-4S] cluster.

Belongs to the complex I 20 kDa subunit family. As to quaternary structure, NDH-1 is composed of 14 different subunits. Subunits NuoB, C, D, E, F, and G constitute the peripheral sector of the complex. The cofactor is [4Fe-4S] cluster.

The protein localises to the cell inner membrane. It carries out the reaction a quinone + NADH + 5 H(+)(in) = a quinol + NAD(+) + 4 H(+)(out). Its function is as follows. NDH-1 shuttles electrons from NADH, via FMN and iron-sulfur (Fe-S) centers, to quinones in the respiratory chain. The immediate electron acceptor for the enzyme in this species is believed to be a menaquinone. Couples the redox reaction to proton translocation (for every two electrons transferred, four hydrogen ions are translocated across the cytoplasmic membrane), and thus conserves the redox energy in a proton gradient. This is NADH-quinone oxidoreductase subunit B 1 from Cytophaga hutchinsonii (strain ATCC 33406 / DSM 1761 / CIP 103989 / NBRC 15051 / NCIMB 9469 / D465).